The primary structure comprises 215 residues: MNKYSIYVDHTLLKPDASLDEIHNLCEEAEENEFYSVCINPCFIKVAKHYLLETPVKICTVVGFPLGANTTETKVFETRNAIALGADEIDMVININQLKSANREYCLQEINEVKKACSDKVLKVIVETALLDQEQKEFAARIILESDADFIKTSTGFAKEGAKLEDIILWKQILGDAKQIKAAGGIKNLDDFKAFIDAGATRIGTSSAIKILNNQ.

D90 functions as the Proton donor/acceptor in the catalytic mechanism. K152 serves as the catalytic Schiff-base intermediate with acetaldehyde. Catalysis depends on K181, which acts as the Proton donor/acceptor.

Belongs to the DeoC/FbaB aldolase family. DeoC type 1 subfamily.

The protein localises to the cytoplasm. The catalysed reaction is 2-deoxy-D-ribose 5-phosphate = D-glyceraldehyde 3-phosphate + acetaldehyde. It participates in carbohydrate degradation; 2-deoxy-D-ribose 1-phosphate degradation; D-glyceraldehyde 3-phosphate and acetaldehyde from 2-deoxy-alpha-D-ribose 1-phosphate: step 2/2. Its function is as follows. Catalyzes a reversible aldol reaction between acetaldehyde and D-glyceraldehyde 3-phosphate to generate 2-deoxy-D-ribose 5-phosphate. This Ureaplasma urealyticum serovar 10 (strain ATCC 33699 / Western) protein is Deoxyribose-phosphate aldolase.